The sequence spans 1342 residues: DNA-directed RNA polymerase subunit beta (1342 aa).

It belongs to the RNA polymerase beta chain family. As to quaternary structure, the RNAP catalytic core consists of 2 alpha, 1 beta, 1 beta' and 1 omega subunit. When a sigma factor is associated with the core the holoenzyme is formed, which can initiate transcription.

The catalysed reaction is RNA(n) + a ribonucleoside 5'-triphosphate = RNA(n+1) + diphosphate. DNA-dependent RNA polymerase catalyzes the transcription of DNA into RNA using the four ribonucleoside triphosphates as substrates. The sequence is that of DNA-directed RNA polymerase subunit beta from Aeromonas salmonicida (strain A449).